We begin with the raw amino-acid sequence, 249 residues long: Small ribosomal subunit protein eS6 (249 aa).

Residues 216 to 229 (RMKEAKEKRQEQIA) are compositionally biased toward basic and acidic residues. A disordered region spans residues 216-249 (RMKEAKEKRQEQIAKRRRLSSLRASTSKSESSQK). A phosphoserine mark is found at Ser-235, Ser-236, Ser-240, Ser-244, and Ser-247. Low complexity predominate over residues 236 to 249 (SLRASTSKSESSQK).

The protein belongs to the eukaryotic ribosomal protein eS6 family. As to quaternary structure, component of the small ribosomal subunit. Part of the small subunit (SSU) processome, composed of more than 70 proteins and the RNA chaperone small nucleolar RNA (snoRNA) U3. In terms of processing, ribosomal protein S6 is the major substrate of protein kinases in eukaryote ribosomes. The phosphorylation is stimulated by growth factors, tumor promoting agents, and mitogens. It is dephosphorylated at growth arrest.

It is found in the cytoplasm. The protein localises to the nucleus. It localises to the nucleolus. Its function is as follows. Component of the 40S small ribosomal subunit. Plays an important role in controlling cell growth and proliferation through the selective translation of particular classes of mRNA. Part of the small subunit (SSU) processome, first precursor of the small eukaryotic ribosomal subunit. During the assembly of the SSU processome in the nucleolus, many ribosome biogenesis factors, an RNA chaperone and ribosomal proteins associate with the nascent pre-rRNA and work in concert to generate RNA folding, modifications, rearrangements and cleavage as well as targeted degradation of pre-ribosomal RNA by the RNA exosome. The sequence is that of Small ribosomal subunit protein eS6 (RPS6) from Gallus gallus (Chicken).